A 414-amino-acid chain; its full sequence is Multifunctional CCA protein (414 aa).

Residues Gly-8 and Arg-11 each contribute to the ATP site. Gly-8 and Arg-11 together coordinate CTP. Mg(2+) contacts are provided by Asp-21 and Asp-23. Residues Arg-91, Arg-137, and Arg-140 each coordinate ATP. CTP-binding residues include Arg-91, Arg-137, and Arg-140. Positions 228–329 (TGIHTLLTLA…LKLLDTIDVW (102 aa)) constitute an HD domain.

Belongs to the tRNA nucleotidyltransferase/poly(A) polymerase family. Bacterial CCA-adding enzyme type 1 subfamily. Monomer. Can also form homodimers and oligomers. It depends on Mg(2+) as a cofactor. The cofactor is Ni(2+).

It carries out the reaction a tRNA precursor + 2 CTP + ATP = a tRNA with a 3' CCA end + 3 diphosphate. The catalysed reaction is a tRNA with a 3' CCA end + 2 CTP + ATP = a tRNA with a 3' CCACCA end + 3 diphosphate. In terms of biological role, catalyzes the addition and repair of the essential 3'-terminal CCA sequence in tRNAs without using a nucleic acid template. Adds these three nucleotides in the order of C, C, and A to the tRNA nucleotide-73, using CTP and ATP as substrates and producing inorganic pyrophosphate. tRNA 3'-terminal CCA addition is required both for tRNA processing and repair. Also involved in tRNA surveillance by mediating tandem CCA addition to generate a CCACCA at the 3' terminus of unstable tRNAs. While stable tRNAs receive only 3'-terminal CCA, unstable tRNAs are marked with CCACCA and rapidly degraded. The chain is Multifunctional CCA protein from Edwardsiella ictaluri (strain 93-146).